The chain runs to 506 residues: Probable Xaa-Pro aminopeptidase PAAG_05466 (506 aa).

Mn(2+)-binding residues include Asp285, Asp296, Glu433, and Glu471.

This sequence belongs to the peptidase M24B family. Requires Mn(2+) as cofactor.

It carries out the reaction Release of any N-terminal amino acid, including proline, that is linked to proline, even from a dipeptide or tripeptide.. Its function is as follows. Catalyzes the removal of a penultimate prolyl residue from the N-termini of peptides. This is Probable Xaa-Pro aminopeptidase PAAG_05466 from Paracoccidioides lutzii (strain ATCC MYA-826 / Pb01) (Paracoccidioides brasiliensis).